The sequence spans 352 residues: Isopentenyl-diphosphate delta-isomerase (352 aa).

6–7 (RK) provides a ligand contact to substrate. FMN is bound by residues 63–65 (AMT), Ser-93, and Asn-122. 93-95 (SQR) contacts substrate. Gln-160 lines the substrate pocket. Glu-161 provides a ligand contact to Mg(2+). FMN is bound by residues Lys-192, Thr-221, 271-273 (GIR), and 292-293 (SQ).

Belongs to the IPP isomerase type 2 family. As to quaternary structure, homooctamer. Dimer of tetramers. The cofactor is FMN. It depends on NADPH as a cofactor. Requires Mg(2+) as cofactor.

It is found in the cytoplasm. The enzyme catalyses isopentenyl diphosphate = dimethylallyl diphosphate. Its function is as follows. Involved in the biosynthesis of isoprenoids. Catalyzes the 1,3-allylic rearrangement of the homoallylic substrate isopentenyl (IPP) to its allylic isomer, dimethylallyl diphosphate (DMAPP). The polypeptide is Isopentenyl-diphosphate delta-isomerase (Pyrobaculum aerophilum (strain ATCC 51768 / DSM 7523 / JCM 9630 / CIP 104966 / NBRC 100827 / IM2)).